The following is a 98-amino-acid chain: Dehydrogenase acuH (98 aa).

Its pathway is secondary metabolite biosynthesis. In terms of biological role, dehydrogenase; part of the gene cluster that mediates the biosynthesis of aculins. The pathway begins with the synthesis of 6-methylsalicylic acid by the polyketide synthase (PKS) acuA via condensation of acetate and malonate units. The 6-methylsalicylic acid decarboxylase acuB then catalyzes the decarboxylation of 6-methylsalicylic acid to yield m-cresol (also known as 3-methylphenol). These first reactions occur in the cytosol. The intermediate m-cresol is then transported into the endoplasmic reticulum where the cytochrome P450 monooxygenase acuC converts it to m-hydroxybenzyl alcohol, which is further converted to gentisyl alcohol by the cytochrome P450 monooxygenase acuD. Gentisyl alcohol is further oxidized by the oxidoreductase acuE that probably catalyzes hydroxylation of the aromatic ring. The aromatic system might then be opened by oxidation through a Baeyer-Villiger type of oxidation, which could be catalyzed by acuF, with the carboxylic acid at C-1 subsequently reduced to an aldehyde by acuG. Subsequently, a hemiacetal is formed, before the dehydrogenase acuH would reduce the double bond between C-4 and C-6. Finally, keto-enol tautomerism results in formation of aculinic acid, which exists as two diastereomers (both R/S configurations at C-1) by non-enzymatic hemiacetal formation. The carboxypeptidase acuI could be involved in the linking of aculinic acid to an aculene A moiety produced by the aculene biosynthesis cluster and which leads to the production of aculin A. AcuI may also be involved in the attachment of proline to aculinic acid to form epi-aculins A and B. The chain is Dehydrogenase acuH from Aspergillus aculeatus (strain ATCC 16872 / CBS 172.66 / WB 5094).